The primary structure comprises 382 residues: Chaperone protein DnaJ (382 aa).

Positions 5–70 (DYYEVLGLKK…QKRAAYDQYG (66 aa)) constitute a J domain. The segment at 134–212 (GTTKDIQINT…CHGEGRVHKK (79 aa)) adopts a CR-type zinc-finger fold. Zn(2+) is bound by residues cysteine 147, cysteine 150, cysteine 164, cysteine 167, cysteine 186, cysteine 189, cysteine 200, and cysteine 203. CXXCXGXG motif repeat units lie at residues 147 to 154 (CDSCGGSG), 164 to 171 (CPHCHGSG), 186 to 193 (CPSCHGSG), and 200 to 207 (CRSCHGEG).

The protein belongs to the DnaJ family. In terms of assembly, homodimer. Zn(2+) serves as cofactor.

The protein resides in the cytoplasm. Participates actively in the response to hyperosmotic and heat shock by preventing the aggregation of stress-denatured proteins and by disaggregating proteins, also in an autonomous, DnaK-independent fashion. Unfolded proteins bind initially to DnaJ; upon interaction with the DnaJ-bound protein, DnaK hydrolyzes its bound ATP, resulting in the formation of a stable complex. GrpE releases ADP from DnaK; ATP binding to DnaK triggers the release of the substrate protein, thus completing the reaction cycle. Several rounds of ATP-dependent interactions between DnaJ, DnaK and GrpE are required for fully efficient folding. Also involved, together with DnaK and GrpE, in the DNA replication of plasmids through activation of initiation proteins. The chain is Chaperone protein DnaJ from Haemophilus influenzae (strain PittGG).